We begin with the raw amino-acid sequence, 236 residues long: Alpha-S2-casein (236 aa).

A signal peptide spans 1–15; it reads MKFFIFTCLLAVALA. A phosphoserine mark is found at S23, S24, S25, S28, S47, S80, S81, S82, S85, S157, and S169. A disordered region spans residues 72 to 93; sequence PTEVYSSSSSSEESAKFPTERE. Residues 84–93 are compositionally biased toward basic and acidic residues; the sequence is ESAKFPTERE.

This sequence belongs to the alpha-casein family. There are at least three different forms found in milk, with varying degrees of phosphorylation. These include form 10-P which is phosphorylated at ten sites that have not been determined, form 11-P which is phosphorylated at eleven sites and form 12-P which is phosphorylated at twelve sites. Mammary gland specific. Secreted in milk.

It localises to the secreted. Functionally, important role in the capacity of milk to transport calcium phosphate. This Equus asinus (Donkey) protein is Alpha-S2-casein.